The sequence spans 617 residues: Proline--tRNA ligase (617 aa).

The protein belongs to the class-II aminoacyl-tRNA synthetase family. ProS type 1 subfamily. Homodimer.

The protein localises to the cytoplasm. It carries out the reaction tRNA(Pro) + L-proline + ATP = L-prolyl-tRNA(Pro) + AMP + diphosphate. Its function is as follows. Catalyzes the attachment of proline to tRNA(Pro) in a two-step reaction: proline is first activated by ATP to form Pro-AMP and then transferred to the acceptor end of tRNA(Pro). As ProRS can inadvertently accommodate and process non-cognate amino acids such as alanine and cysteine, to avoid such errors it has two additional distinct editing activities against alanine. One activity is designated as 'pretransfer' editing and involves the tRNA(Pro)-independent hydrolysis of activated Ala-AMP. The other activity is designated 'posttransfer' editing and involves deacylation of mischarged Ala-tRNA(Pro). The misacylated Cys-tRNA(Pro) is not edited by ProRS. This Streptococcus agalactiae serotype V (strain ATCC BAA-611 / 2603 V/R) protein is Proline--tRNA ligase.